The following is a 77-amino-acid chain: Defensin-like protein 159 (77 aa).

An N-terminal signal peptide occupies residues 1-27; the sequence is MAKLSCSYFLVLILVFSAFLMVERAEG. 4 disulfides stabilise this stretch: Cys30/Cys77, Cys40/Cys59, Cys45/Cys71, and Cys49/Cys73.

Belongs to the DEFL family.

Its subcellular location is the secreted. The protein is Defensin-like protein 159 (LCR25) of Arabidopsis thaliana (Mouse-ear cress).